The chain runs to 274 residues: Large ribosomal subunit protein uL2 (274 aa).

The tract at residues 224–256 (AMNPIDHPHGGGEGRTGEGRHAVDPWGNLTKGY) is disordered. Basic and acidic residues predominate over residues 229-246 (DHPHGGGEGRTGEGRHAV).

Belongs to the universal ribosomal protein uL2 family. As to quaternary structure, part of the 50S ribosomal subunit. Forms a bridge to the 30S subunit in the 70S ribosome.

Functionally, one of the primary rRNA binding proteins. Required for association of the 30S and 50S subunits to form the 70S ribosome, for tRNA binding and peptide bond formation. It has been suggested to have peptidyltransferase activity; this is somewhat controversial. Makes several contacts with the 16S rRNA in the 70S ribosome. The protein is Large ribosomal subunit protein uL2 of Acidovorax sp. (strain JS42).